The chain runs to 151 residues: Large ribosomal subunit protein bL9 (151 aa).

It belongs to the bacterial ribosomal protein bL9 family.

Binds to the 23S rRNA. This is Large ribosomal subunit protein bL9 from Oenococcus oeni (strain ATCC BAA-331 / PSU-1).